The primary structure comprises 231 residues: Cysteine-rich venom protein VAR10 (231 aa).

The signal sequence occupies residues 1 to 19; sequence MILLKLYLTLAAILCQSRG. Positions 41 to 169 constitute an SCP domain; that stretch reads NKHNDLRRTV…SLKYFQVCQY (129 aa). Disulfide bonds link C77-C156, C95-C170, C151-C167, C189-C196, and C214-C231. A ShKT domain is found at 205 to 231; that stretch reads CAYNDDYTSCPDLTKQVGCHHPVTANC.

The protein belongs to the CRISP family. Contains 8 disulfide bonds. Expressed by the venom gland.

It is found in the secreted. In terms of biological role, blocks ryanodine receptors, and potassium channels. The sequence is that of Cysteine-rich venom protein VAR10 from Varanus varius (Lace monitor lizard).